A 251-amino-acid chain; its full sequence is 3-isopropylmalate dehydratase small subunit 1 (251 aa).

A chloroplast-targeting transit peptide spans 1–59; sequence MAASLQSANPTLSRTLASPNKPSSFATFRSPFLRFNSTSVASNFKPLVSREASSSFVTR.

The protein belongs to the LeuD family. Heterodimer of the large LEUC/IIL1 subunit and the small LEUD (SSU1, SSU2 or SSU3) subunits. Expressed at low levels in roots, root tips, at the basis of the hypocotyls, and in emerging leaves. In young seedlings, expressed in cotyledon epidermal cells. In hypocotyls, expressed in peripheral cells. In seedling roots, expressed in the epidermis, including root hairs, and throughout the cortex. In rosette leaves, expressed in the upper and lower epidermis. In roots of adult plants, expressed in the root tips and cortex of the mature root enclosing the stele. In flowering stalks, expressed in the epidermis. Expressed in the carpel epidermis.

It is found in the plastid. The protein resides in the chloroplast stroma. The catalysed reaction is (2R,3S)-3-isopropylmalate = (2S)-2-isopropylmalate. The protein operates within amino-acid biosynthesis; L-leucine biosynthesis; L-leucine from 3-methyl-2-oxobutanoate: step 2/4. Its function is as follows. Catalyzes the isomerization between 2-isopropylmalate and 3-isopropylmalate, via the formation of 2-isopropylmaleate. Plays an essential role in leucine biosynthesis. Functions in both the biosynthesis of leucine, and in the methionine chain elongation pathway of aliphatic glucosinolate formation. Plays an essential role in female gametophyte development. The sequence is that of 3-isopropylmalate dehydratase small subunit 1 from Arabidopsis thaliana (Mouse-ear cress).